The chain runs to 312 residues: L-lactate dehydrogenase (312 aa).

NAD(+)-binding residues include valine 14, aspartate 35, and tyrosine 66. Substrate-binding residues include glutamine 83 and arginine 90. NAD(+) is bound by residues serine 103, 120–122 (ASN), and serine 145. 122-125 (NPVD) contributes to the substrate binding site. 150–153 (DSAR) provides a ligand contact to substrate. The active-site Proton acceptor is the histidine 177. Position 220 is a phosphotyrosine (tyrosine 220). Substrate is bound at residue threonine 229.

It belongs to the LDH/MDH superfamily. LDH family. As to quaternary structure, homotetramer.

It localises to the cytoplasm. The enzyme catalyses (S)-lactate + NAD(+) = pyruvate + NADH + H(+). Its pathway is fermentation; pyruvate fermentation to lactate; (S)-lactate from pyruvate: step 1/1. Its function is as follows. Catalyzes the conversion of lactate to pyruvate. This chain is L-lactate dehydrogenase, found in Mycoplasma genitalium (strain ATCC 33530 / DSM 19775 / NCTC 10195 / G37) (Mycoplasmoides genitalium).